We begin with the raw amino-acid sequence, 476 residues long: Aspartate kinase Ask_Ect (476 aa).

The region spanning 405–476 is the ACT domain; the sequence is SAIGSDLKVK…ENHGDVIAAA (72 aa).

The protein belongs to the aspartokinase family. Monomer.

It localises to the cytoplasm. The catalysed reaction is L-aspartate + ATP = 4-phospho-L-aspartate + ADP. It participates in amine and polyamine biosynthesis; ectoine biosynthesis. Allosterically and strongly feedback inhibited by tryptophan. The presence of either 650 mM NaCl or KCl reduces the inhibition by tryptophan. In terms of biological role, involved in the biosynthesis of L-aspartate-beta-semialdehyde, which is an intermediate in the biosynthesis of ectoine, a highly soluble organic osmolyte, called compatible solute. Ectoine is used to avoid excessive water efflux, plasmolysis, molecular crowding of the cytoplasm, and cessation of growth in high salinity environments. Catalyzes the phosphorylation of the beta-carboxyl group of L-aspartate to yield 4-phospho-L-aspartate. The protein is Aspartate kinase Ask_Ect (ask) of Stutzerimonas stutzeri (strain A1501) (Pseudomonas stutzeri).